Here is a 318-residue protein sequence, read N- to C-terminus: Large ribosomal subunit protein uL10 (318 aa).

At Tyr-24 the chain carries Phosphotyrosine. A Phosphothreonine modification is found at Thr-59. Residue Lys-264 forms a Glycyl lysine isopeptide (Lys-Gly) (interchain with G-Cter in ubiquitin) linkage. The interval 293–318 (TAAPAKVEAKEESEESDEDMGFGLFD) is disordered. Lys-298 is covalently cross-linked (Glycyl lysine isopeptide (Lys-Gly) (interchain with G-Cter in SUMO1); alternate). Lys-298 participates in a covalent cross-link: Glycyl lysine isopeptide (Lys-Gly) (interchain with G-Cter in SUMO2); alternate. Positions 303 to 312 (EESEESDEDM) are enriched in acidic residues. Phosphoserine is present on residues Ser-305 and Ser-308.

The protein belongs to the universal ribosomal protein uL10 family. P0 forms a pentameric complex by interaction with dimers of P1 and P2. Identified in a IGF2BP1-dependent mRNP granule complex containing untranslated mRNAs. Interacts with APEX1. Interacts with FMR1. Post-translationally, ubiquitinated at Lys-264 by RNF14 and RNF25 in response to ribosome collisions (ribosome stalling).

Its subcellular location is the nucleus. It is found in the cytoplasm. Functionally, ribosomal protein P0 is the functional equivalent of E.coli protein L10. This chain is Large ribosomal subunit protein uL10 (RPLP0), found in Bos taurus (Bovine).